Reading from the N-terminus, the 114-residue chain is Large ribosomal subunit protein uL22 (114 aa).

The protein belongs to the universal ribosomal protein uL22 family. Part of the 50S ribosomal subunit.

In terms of biological role, this protein binds specifically to 23S rRNA; its binding is stimulated by other ribosomal proteins, e.g. L4, L17, and L20. It is important during the early stages of 50S assembly. It makes multiple contacts with different domains of the 23S rRNA in the assembled 50S subunit and ribosome. Functionally, the globular domain of the protein is located near the polypeptide exit tunnel on the outside of the subunit, while an extended beta-hairpin is found that lines the wall of the exit tunnel in the center of the 70S ribosome. The sequence is that of Large ribosomal subunit protein uL22 from Desulfitobacterium hafniense (strain DSM 10664 / DCB-2).